The primary structure comprises 245 residues: NAD(P)H-quinone oxidoreductase subunit K (245 aa).

The [4Fe-4S] cluster site is built by Cys58, Cys59, Cys123, and Cys154. Positions 210 to 245 are disordered; the sequence is SDTRSAPPKELAEAIGMPIPPALLTEKAQKEEQTRG. The segment covering 236–245 has biased composition (basic and acidic residues); sequence KAQKEEQTRG.

The protein belongs to the complex I 20 kDa subunit family. NDH-1 can be composed of about 15 different subunits; different subcomplexes with different compositions have been identified which probably have different functions. [4Fe-4S] cluster serves as cofactor.

It localises to the cellular thylakoid membrane. The catalysed reaction is a plastoquinone + NADH + (n+1) H(+)(in) = a plastoquinol + NAD(+) + n H(+)(out). It carries out the reaction a plastoquinone + NADPH + (n+1) H(+)(in) = a plastoquinol + NADP(+) + n H(+)(out). In terms of biological role, NDH-1 shuttles electrons from an unknown electron donor, via FMN and iron-sulfur (Fe-S) centers, to quinones in the respiratory and/or the photosynthetic chain. The immediate electron acceptor for the enzyme in this species is believed to be plastoquinone. Couples the redox reaction to proton translocation, and thus conserves the redox energy in a proton gradient. Cyanobacterial NDH-1 also plays a role in inorganic carbon-concentration. The sequence is that of NAD(P)H-quinone oxidoreductase subunit K from Nostoc punctiforme (strain ATCC 29133 / PCC 73102).